The sequence spans 558 residues: Potassium-transporting ATPase potassium-binding subunit (558 aa).

The next 11 helical transmembrane spans lie at 1 to 21, 58 to 78, 85 to 105, 130 to 150, 179 to 199, 245 to 265, 279 to 299, 374 to 394, 416 to 436, 484 to 504, and 527 to 547; these read MDTLAGILQVASVVLVLVLVH, WPAYLRAVLAFSLVGVLVVYG, FLPYALGLPAVPEGISFNTAV, GLAVQNFVSAAVGIAVAIALV, LSLVTAVVLIAGGVIQNFAGF, PTAWTSAFQVLLMLVIPFSLP, TAIAAVMATIAVASLTALTLF, GLYGMLVLAVIAVFVAGLLVG, ILVTPILVLVGTALSFAIPAV, ALGVAMLLGRFVPIVLVLALA, and FVGLLIGVTVIVTALTYFPVL.

The protein belongs to the KdpA family. As to quaternary structure, the system is composed of three essential subunits: KdpA, KdpB and KdpC.

The protein resides in the cell membrane. In terms of biological role, part of the high-affinity ATP-driven potassium transport (or Kdp) system, which catalyzes the hydrolysis of ATP coupled with the electrogenic transport of potassium into the cytoplasm. This subunit binds the extracellular potassium ions and delivers the ions to the membrane domain of KdpB through an intramembrane tunnel. This chain is Potassium-transporting ATPase potassium-binding subunit, found in Clavibacter sepedonicus (Clavibacter michiganensis subsp. sepedonicus).